Here is a 401-residue protein sequence, read N- to C-terminus: Formate-dependent phosphoribosylglycinamide formyltransferase (401 aa).

N(1)-(5-phospho-beta-D-ribosyl)glycinamide is bound by residues 22-23 (EL) and glutamate 82. ATP-binding positions include arginine 115, lysine 157, 162 to 167 (SSGKGQ), 197 to 200 (EGFI), and glutamate 205. The region spanning 120–315 (RLAAESLGLP…EFELHARAIL (196 aa)) is the ATP-grasp domain. Residues glutamate 274 and glutamate 286 each coordinate Mg(2+). N(1)-(5-phospho-beta-D-ribosyl)glycinamide contacts are provided by residues aspartate 293, lysine 362, and 369–370 (RR).

It belongs to the PurK/PurT family. In terms of assembly, homodimer.

The enzyme catalyses N(1)-(5-phospho-beta-D-ribosyl)glycinamide + formate + ATP = N(2)-formyl-N(1)-(5-phospho-beta-D-ribosyl)glycinamide + ADP + phosphate + H(+). The protein operates within purine metabolism; IMP biosynthesis via de novo pathway; N(2)-formyl-N(1)-(5-phospho-D-ribosyl)glycinamide from N(1)-(5-phospho-D-ribosyl)glycinamide (formate route): step 1/1. In terms of biological role, involved in the de novo purine biosynthesis. Catalyzes the transfer of formate to 5-phospho-ribosyl-glycinamide (GAR), producing 5-phospho-ribosyl-N-formylglycinamide (FGAR). Formate is provided by PurU via hydrolysis of 10-formyl-tetrahydrofolate. The protein is Formate-dependent phosphoribosylglycinamide formyltransferase of Cupriavidus necator (strain ATCC 17699 / DSM 428 / KCTC 22496 / NCIMB 10442 / H16 / Stanier 337) (Ralstonia eutropha).